The chain runs to 78 residues: Large ribosomal subunit protein bL28 (78 aa).

This sequence belongs to the bacterial ribosomal protein bL28 family.

This is Large ribosomal subunit protein bL28 from Francisella tularensis subsp. holarctica (strain FTNF002-00 / FTA).